A 364-amino-acid chain; its full sequence is Transcription factor IIIA (364 aa).

9 C2H2-type zinc fingers span residues 38–62 (FICS…LCKH), 68–92 (FVCD…VLIH), 98–123 (FVCA…ERKH), 130–154 (YVCS…QCQH), 160–184 (FRCT…GKVH), 187–211 (YLCQ…REAH), 215–237 (ITCN…MKTH), 244–269 (YRCP…LSFH), and 275–299 (FVCE…SVVH). Positions 299–364 (HDPDKKRMKL…PPPAALLTVC (66 aa)) are disordered. Over residues 338–352 (SLPNASAESSSSPEA) the composition is skewed to low complexity.

The protein localises to the nucleus. Involved in ribosomal large subunit biogenesis. Binds the approximately 50 base pairs internal control region (ICR) of 5S ribosomal RNA genes. It is required for their RNA polymerase III-dependent transcription and may also maintain the transcription of other genes. Also binds the transcribed 5S RNA's. This Mus musculus (Mouse) protein is Transcription factor IIIA (Gtf3a).